The primary structure comprises 417 residues: Gamma-glutamyl phosphate reductase (417 aa).

Belongs to the gamma-glutamyl phosphate reductase family.

It is found in the cytoplasm. It carries out the reaction L-glutamate 5-semialdehyde + phosphate + NADP(+) = L-glutamyl 5-phosphate + NADPH + H(+). The protein operates within amino-acid biosynthesis; L-proline biosynthesis; L-glutamate 5-semialdehyde from L-glutamate: step 2/2. Functionally, catalyzes the NADPH-dependent reduction of L-glutamate 5-phosphate into L-glutamate 5-semialdehyde and phosphate. The product spontaneously undergoes cyclization to form 1-pyrroline-5-carboxylate. The chain is Gamma-glutamyl phosphate reductase from Cronobacter sakazakii (strain ATCC BAA-894) (Enterobacter sakazakii).